The sequence spans 161 residues: MNEVERTLVIIKPDAVVRGLIGEIISRFEKKGLKIVGMKMIWIDRELAEKHYEEHKGKPFFEALIDYITKAPVVVMVVEGRYAVEVVRKMAGATDPKDAAPGTIRGDYGLDIGDAIYNVIHASDSKESAEREISLYFKPEEIYEYCKAADWFYREKKQAKC.

ATP-binding residues include Lys12, Phe60, Arg88, Thr94, and Arg105. The active-site Pros-phosphohistidine intermediate is the His121.

This sequence belongs to the NDK family. It depends on Mg(2+) as a cofactor.

Its subcellular location is the cytoplasm. It catalyses the reaction a 2'-deoxyribonucleoside 5'-diphosphate + ATP = a 2'-deoxyribonucleoside 5'-triphosphate + ADP. The enzyme catalyses a ribonucleoside 5'-diphosphate + ATP = a ribonucleoside 5'-triphosphate + ADP. In terms of biological role, major role in the synthesis of nucleoside triphosphates other than ATP. The ATP gamma phosphate is transferred to the NDP beta phosphate via a ping-pong mechanism, using a phosphorylated active-site intermediate. The chain is Nucleoside diphosphate kinase from Pyrococcus furiosus (strain ATCC 43587 / DSM 3638 / JCM 8422 / Vc1).